Reading from the N-terminus, the 389-residue chain is 8-amino-7-oxononanoate synthase (389 aa).

Substrate is bound at residue R31. Position 109–110 (109–110 (GY)) interacts with pyridoxal 5'-phosphate. H134 lines the substrate pocket. Pyridoxal 5'-phosphate contacts are provided by residues S180, 205–208 (DEAH), and 236–239 (TLSK). Position 239 is an N6-(pyridoxal phosphate)lysine (K239). T349 provides a ligand contact to substrate.

This sequence belongs to the class-II pyridoxal-phosphate-dependent aminotransferase family. BioF subfamily. Homodimer. Pyridoxal 5'-phosphate serves as cofactor.

The enzyme catalyses 6-carboxyhexanoyl-[ACP] + L-alanine + H(+) = (8S)-8-amino-7-oxononanoate + holo-[ACP] + CO2. It participates in cofactor biosynthesis; biotin biosynthesis. Functionally, catalyzes the decarboxylative condensation of pimeloyl-[acyl-carrier protein] and L-alanine to produce 8-amino-7-oxononanoate (AON), [acyl-carrier protein], and carbon dioxide. The sequence is that of 8-amino-7-oxononanoate synthase from Mycobacterium ulcerans (strain Agy99).